A 335-amino-acid polypeptide reads, in one-letter code: Biotin synthase (335 aa).

Residues 51–278 enclose the Radical SAM core domain; that stretch reads NTVQLSSLLS…LAKVRLSAGR (228 aa). C66, C70, and C73 together coordinate [4Fe-4S] cluster. Positions 110, 141, 201, and 273 each coordinate [2Fe-2S] cluster.

It belongs to the radical SAM superfamily. Biotin synthase family. As to quaternary structure, homodimer. [4Fe-4S] cluster is required as a cofactor. [2Fe-2S] cluster serves as cofactor.

The enzyme catalyses (4R,5S)-dethiobiotin + (sulfur carrier)-SH + 2 reduced [2Fe-2S]-[ferredoxin] + 2 S-adenosyl-L-methionine = (sulfur carrier)-H + biotin + 2 5'-deoxyadenosine + 2 L-methionine + 2 oxidized [2Fe-2S]-[ferredoxin]. Its pathway is cofactor biosynthesis; biotin biosynthesis; biotin from 7,8-diaminononanoate: step 2/2. Its function is as follows. Catalyzes the conversion of dethiobiotin (DTB) to biotin by the insertion of a sulfur atom into dethiobiotin via a radical-based mechanism. This is Biotin synthase from Bordetella pertussis (strain Tohama I / ATCC BAA-589 / NCTC 13251).